A 454-amino-acid polypeptide reads, in one-letter code: MTVNSKRIPFGKPMLEAFCMDPEYTNLNSSSCGSWPKVVSKQIRDYWSLLEAQPDLFSEFSQGLVLQEARIGLAHLVHAAVSECVLVSNVTTGIFTVLYNQAFEERDVVVTLSTTYGAIDHGITSLAETRPFKTRRVEFELPTTGQKIVSQFETAMAQIRADGLRPRLAILETIVSIPAVRMPFEDLLRVCQKEGIMTLVDGAHSVGQFEVNLQELQPDFFVSDCHKWLFVPRPCAVLYVAERNQHMMRSVIPTSFGFIPKNGNSRLPLWSQMVSASETASSFETLFAYTATSDYMPHLCIPAALRFRRDVCGGEAAIYEYIKWLAKEGGDKIADILQTEVLEEPGLGAGVDGQMRNCGIVTVRLPLAIATGPSTAPAHVPGGALTEKEVGPAVRYLTKALAERYKTWIPIIDYRGWIWARLCAQVYLEVSDFEMAGNSLKVICEEILNREMGQ.

Lys-227 carries the post-translational modification N6-(pyridoxal phosphate)lysine.

The protein belongs to the class-V pyridoxal-phosphate-dependent aminotransferase family. Pyridoxal 5'-phosphate is required as a cofactor.

Its pathway is alkaloid biosynthesis. L-cysteine desulfhydrase-like protein; part of the gene cluster that mediates the biosynthesis of loline alkaloids, potent insecticidal agents composed of a pyrrolizidine ring system and an uncommon ether bridge linking carbons 2 and 7. Lolines are structurally differentiated by the various modifications of the L-amino group and include norloline, loline, N-methylloline, N-acetylloline, N-acetylnorloline, and N-formylloline. The first committed step is the condensation of O-acetyl-L-homoserine (derived from L-aspartic acid) and L-proline, probably catalyzed by the gamma-type pyridoxal 5'-phosphate(PLP)-dependent enzyme lolC, to give the diamino diacid, NACPP. Ensuing cyclization, decarboxylation, and acetylation steps yield 1-exo-acetamidopyrrolizidine (AcAP). LolO is required for installation of the ether bridge upon the pathway intermediate, 1-exo-acetamidopyrrolizidine (AcAP). In sequential 2-oxoglutarate- and O(2)-consuming steps, lolO removes hydrogens from C2 and C7 of AcAP to form both carbon-oxygen bonds in N-acetylnorloline (NANL), the precursor to all other lolines. The enzymes lolD, lolE, lolF and lolT have also been proposed to be involved in the ether-bridge installation. Further processing of the exocyclic moiety of NANL by fungal N-acetamidase (LolN), methyltransferase (LolM), and cytochrome P450 (LolP) enzymes, with occasional involvement of a plant acetyltransferase, generates the other known lolines. LolN transforms NANL to norlonine which is monomethylated and dimethylated to respectively lonine and N-methyllonine (NML) by lolM. LolP catalyzes hydroxylation of the methyl group in N-methylloline (NML) and further oxygenation to N-formylloline (NFL). A plant acetyltransferase is responsible for the acetylation of loline to form N-acetylloline (NAL). LolA might interact with aspartate kinase to prevent feedback inhibition of its activity by these end products and thereby promote production of L-homoserine from L-aspartate. The chain is L-cysteine desulfhydrase-like protein lolT1 from Epichloe uncinata (Endophyte fungus).